Here is a 98-residue protein sequence, read N- to C-terminus: NADH-ubiquinone oxidoreductase chain 4L (98 aa).

Transmembrane regions (helical) follow at residues 1–21, 29–49, and 61–81; these read MSMV…GLLV, SLLC…ITIL, and IILL…LVMV.

Belongs to the complex I subunit 4L family. As to quaternary structure, core subunit of respiratory chain NADH dehydrogenase (Complex I) which is composed of 45 different subunits.

The protein localises to the mitochondrion inner membrane. It catalyses the reaction a ubiquinone + NADH + 5 H(+)(in) = a ubiquinol + NAD(+) + 4 H(+)(out). Its function is as follows. Core subunit of the mitochondrial membrane respiratory chain NADH dehydrogenase (Complex I) which catalyzes electron transfer from NADH through the respiratory chain, using ubiquinone as an electron acceptor. Part of the enzyme membrane arm which is embedded in the lipid bilayer and involved in proton translocation. The sequence is that of NADH-ubiquinone oxidoreductase chain 4L (MT-ND4L) from Mephitis mephitis (Striped skunk).